Reading from the N-terminus, the 817-residue chain is DNA ligase (817 aa).

NAD(+)-binding positions include 45–49 (DVEYD), 94–95 (SI), and Glu131. Lys133 acts as the N6-AMP-lysine intermediate in catalysis. NAD(+) contacts are provided by Arg154, Glu193, Lys311, and Lys335. Residues Cys444, Cys447, Cys462, and Cys468 each coordinate Zn(2+). In terms of domain architecture, BRCT spans 733 to 817 (AEEGVLDGKT…LLKKPAGDQA (85 aa)).

This sequence belongs to the NAD-dependent DNA ligase family. LigA subfamily. It depends on Mg(2+) as a cofactor. Requires Mn(2+) as cofactor.

The enzyme catalyses NAD(+) + (deoxyribonucleotide)n-3'-hydroxyl + 5'-phospho-(deoxyribonucleotide)m = (deoxyribonucleotide)n+m + AMP + beta-nicotinamide D-nucleotide.. Its function is as follows. DNA ligase that catalyzes the formation of phosphodiester linkages between 5'-phosphoryl and 3'-hydroxyl groups in double-stranded DNA using NAD as a coenzyme and as the energy source for the reaction. It is essential for DNA replication and repair of damaged DNA. This Ralstonia pickettii (strain 12J) protein is DNA ligase.